Reading from the N-terminus, the 1408-residue chain is DNA-directed RNA polymerase subunit beta' (1408 aa).

4 residues coordinate Zn(2+): cysteine 70, cysteine 72, cysteine 85, and cysteine 88. Aspartate 460, aspartate 462, and aspartate 464 together coordinate Mg(2+). The Zn(2+) site is built by cysteine 814, cysteine 888, cysteine 895, and cysteine 898.

It belongs to the RNA polymerase beta' chain family. The RNAP catalytic core consists of 2 alpha, 1 beta, 1 beta' and 1 omega subunit. When a sigma factor is associated with the core the holoenzyme is formed, which can initiate transcription. Mg(2+) serves as cofactor. The cofactor is Zn(2+).

It catalyses the reaction RNA(n) + a ribonucleoside 5'-triphosphate = RNA(n+1) + diphosphate. Its function is as follows. DNA-dependent RNA polymerase catalyzes the transcription of DNA into RNA using the four ribonucleoside triphosphates as substrates. The chain is DNA-directed RNA polymerase subunit beta' from Baumannia cicadellinicola subsp. Homalodisca coagulata.